The primary structure comprises 131 residues: Large ribosomal subunit protein bL17 (131 aa).

This sequence belongs to the bacterial ribosomal protein bL17 family. Part of the 50S ribosomal subunit. Contacts protein L32.

This is Large ribosomal subunit protein bL17 from Nitrosospira multiformis (strain ATCC 25196 / NCIMB 11849 / C 71).